Consider the following 509-residue polypeptide: MPNVLSDDEELLNGLGSEIMKPSRQGNHMARTVKRWVNKERATTADLKNVNIDGVHGPVNTESYISPGQLYSTDSGNLFHAGRILVVLVGLPATSKTLLSVAITRYTRWLGVRTKSFHFSEYKESAKNIPSDYFCVVPTSKEGVAFVEKLRMQMLNDILAFFNDLSGQLAIYDALNIRKIDRKNLETTFSEIGVKVLFIESIVSDQEIMNRNIALALESNDYKGLSTDEAIDEYMRRLSVNEPYYEMMTHDEELSYIKYINLGKQIIVKDNIHGYLVNKIVFFLMNLRQKKGCVYFARCGTSDKDNYIHDEELNEEGIHYSQVLKDFVLQRIKQKRQAKKNSDSLVEVIDGSHDEDLKTSLIVWTGPRKRTHDTALFFSKEGIKVQQRSELRQLNPGSIADLTDQQIMDKFPSEYKESLKDPYHFRFPRAESYHDLAVRMEPLLLEMEHTSKDILIIAHESTLRVLYGYLMACTCVELPNLNFTRDKLVEISFSPFCNTVELLNIPLTS.

Phosphoserine is present on serine 6. Residues 6–291 (SDDEELLNGL…FFLMNLRQKK (286 aa)) form a 6-phosphofructo-2-kinase region. Residue 90 to 98 (GLPATSKTL) coordinates ATP. Residue aspartate 173 is the Proton donor/acceptor of the active site. 212-217 (NIALAL) is a binding site for ATP. Arginine 237 is a binding site for beta-D-fructose 6-phosphate. Residues 292-466 (GCVYFARCGT…IAHESTLRVL (175 aa)) form a fructose-2,6-bisphosphatase region. Beta-D-fructose 2,6-bisphosphate is bound at residue arginine 298. 415 to 418 (YKES) serves as a coordination point for ATP. The beta-D-fructose 2,6-bisphosphate site is built by tyrosine 433 and arginine 464. Position 460-464 (460-464 (ESTLR)) interacts with ATP.

It in the C-terminal section; belongs to the phosphoglycerate mutase family. In terms of assembly, homodimer.

Its subcellular location is the cytoplasm. It catalyses the reaction beta-D-fructose 2,6-bisphosphate + H2O = beta-D-fructose 6-phosphate + phosphate. The enzyme catalyses beta-D-fructose 6-phosphate + ATP = beta-D-fructose 2,6-bisphosphate + ADP + H(+). In terms of biological role, synthesis and degradation of fructose 2,6-bisphosphate. This is Putative 6-phosphofructo-2-kinase/fructose-2,6-bisphosphatase YLR345W from Saccharomyces cerevisiae (strain ATCC 204508 / S288c) (Baker's yeast).